A 76-amino-acid polypeptide reads, in one-letter code: Omega-conotoxin-like TxO3 (76 aa).

Residues 1 to 22 (MKLTCVVIVAVLFLTAWTFVTA) form the signal peptide. Residues 23-52 (VPHSSNALENLYLKAHHEMNNPEASELNKR) constitute a propeptide that is removed on maturation. 3 cysteine pairs are disulfide-bonded: Cys-53–Cys-67, Cys-60–Cys-71, and Cys-66–Cys-75.

Belongs to the conotoxin O1 superfamily. Expressed by the venom duct.

The protein localises to the secreted. In terms of biological role, omega-conotoxins act at presynaptic membranes, they bind and block voltage-gated calcium channels (Cav). The sequence is that of Omega-conotoxin-like TxO3 (TXO3) from Conus textile (Cloth-of-gold cone).